A 420-amino-acid chain; its full sequence is Serine hydroxymethyltransferase (420 aa).

(6S)-5,6,7,8-tetrahydrofolate contacts are provided by residues Leu121 and Gly125 to Leu127. An N6-(pyridoxal phosphate)lysine modification is found at Lys229.

The protein belongs to the SHMT family. As to quaternary structure, homodimer. Pyridoxal 5'-phosphate serves as cofactor.

Its subcellular location is the cytoplasm. The enzyme catalyses (6R)-5,10-methylene-5,6,7,8-tetrahydrofolate + glycine + H2O = (6S)-5,6,7,8-tetrahydrofolate + L-serine. It participates in one-carbon metabolism; tetrahydrofolate interconversion. The protein operates within amino-acid biosynthesis; glycine biosynthesis; glycine from L-serine: step 1/1. In terms of biological role, catalyzes the reversible interconversion of serine and glycine with tetrahydrofolate (THF) serving as the one-carbon carrier. This reaction serves as the major source of one-carbon groups required for the biosynthesis of purines, thymidylate, methionine, and other important biomolecules. Also exhibits THF-independent aldolase activity toward beta-hydroxyamino acids, producing glycine and aldehydes, via a retro-aldol mechanism. This is Serine hydroxymethyltransferase from Glaesserella parasuis serovar 5 (strain SH0165) (Haemophilus parasuis).